We begin with the raw amino-acid sequence, 390 residues long: Putative nickel insertion protein (390 aa).

Belongs to the LarC family.

In Geotalea daltonii (strain DSM 22248 / JCM 15807 / FRC-32) (Geobacter daltonii), this protein is Putative nickel insertion protein.